Consider the following 362-residue polypeptide: DNA polymerase IV (362 aa).

One can recognise a UmuC domain in the interval 6–187 (IIHVDMDAFY…LPVSSFHGVG (182 aa)). Residues Asp-10 and Asp-105 each coordinate Mg(2+). Glu-106 is a catalytic residue.

This sequence belongs to the DNA polymerase type-Y family. As to quaternary structure, monomer. Requires Mg(2+) as cofactor.

The protein resides in the cytoplasm. It catalyses the reaction DNA(n) + a 2'-deoxyribonucleoside 5'-triphosphate = DNA(n+1) + diphosphate. In terms of biological role, poorly processive, error-prone DNA polymerase involved in untargeted mutagenesis. Copies undamaged DNA at stalled replication forks, which arise in vivo from mismatched or misaligned primer ends. These misaligned primers can be extended by PolIV. Exhibits no 3'-5' exonuclease (proofreading) activity. May be involved in translesional synthesis, in conjunction with the beta clamp from PolIII. The chain is DNA polymerase IV from Leptospira interrogans serogroup Icterohaemorrhagiae serovar Lai (strain 56601).